The following is a 237-amino-acid chain: Proteasome subunit alpha (237 aa).

Belongs to the peptidase T1A family. As to quaternary structure, the 20S proteasome core is composed of 14 alpha and 14 beta subunits that assemble into four stacked heptameric rings, resulting in a barrel-shaped structure. The two inner rings, each composed of seven catalytic beta subunits, are sandwiched by two outer rings, each composed of seven alpha subunits. The catalytic chamber with the active sites is on the inside of the barrel. Has a gated structure, the ends of the cylinder being occluded by the N-termini of the alpha-subunits. Is capped by the proteasome-associated ATPase, ARC.

The protein localises to the cytoplasm. It participates in protein degradation; proteasomal Pup-dependent pathway. Its activity is regulated as follows. The formation of the proteasomal ATPase ARC-20S proteasome complex, likely via the docking of the C-termini of ARC into the intersubunit pockets in the alpha-rings, may trigger opening of the gate for substrate entry. Interconversion between the open-gate and close-gate conformations leads to a dynamic regulation of the 20S proteasome proteolysis activity. In terms of biological role, component of the proteasome core, a large protease complex with broad specificity involved in protein degradation. The chain is Proteasome subunit alpha from Kineococcus radiotolerans (strain ATCC BAA-149 / DSM 14245 / SRS30216).